The following is a 999-amino-acid chain: Helicase required for RNAi-mediated heterochromatin assembly 1 (999 aa).

Positions Glu-61–Arg-90 are disordered. Over residues Lys-70–Ser-88 the composition is skewed to basic and acidic residues. Position 94 is a phosphoserine (Ser-94). Positions Arg-106 to Ala-124 are enriched in basic and acidic residues. The segment at Arg-106–Arg-131 is disordered. Residue Gly-393–Ser-400 coordinates ATP.

As to quaternary structure, cid12, hrr1 and rdp1 interact forming the RNA-directed RNA polymerase complex (RDRC). The RDRC complex interacts with the RITS complex via interaction between ago1 and hrr1. Clr4 has a role in mediating this interaction.

The protein localises to the cytoplasm. It localises to the nucleus. The enzyme catalyses ATP + H2O = ADP + phosphate + H(+). Functionally, has a role in the RNA interference (RNAi) pathway which is important for heterochromatin formation and accurate chromosome segregation. A member of the RNA-directed RNA polymerase complex (RDRC) which is involved in the generation of small interfering RNAs (siRNAs) and mediate their association with the RNA-induced transcriptional silencing (RITS) complex. RITS acts as a priming complex for dsRNA synthesis at the site of non-coding centromeric RNA. This is Helicase required for RNAi-mediated heterochromatin assembly 1 (hrr1) from Schizosaccharomyces pombe (strain 972 / ATCC 24843) (Fission yeast).